A 107-amino-acid polypeptide reads, in one-letter code: ATP-dependent Clp protease adapter protein ClpS (107 aa).

The span at 1 to 12 (MSGDKDFDKDSD) shows a compositional bias: basic and acidic residues. The interval 1–21 (MSGDKDFDKDSDVTVITRTTP) is disordered.

This sequence belongs to the ClpS family. As to quaternary structure, binds to the N-terminal domain of the chaperone ClpA.

Involved in the modulation of the specificity of the ClpAP-mediated ATP-dependent protein degradation. The polypeptide is ATP-dependent Clp protease adapter protein ClpS (Zymomonas mobilis subsp. mobilis (strain ATCC 31821 / ZM4 / CP4)).